We begin with the raw amino-acid sequence, 474 residues long: tRNA-2-methylthio-N(6)-dimethylallyladenosine synthase (474 aa).

An MTTase N-terminal domain is found at 3 to 120 (KKLYIKTFGC…LPQMISTRQI (118 aa)). Positions 12, 49, 83, 157, 161, and 164 each coordinate [4Fe-4S] cluster. The Radical SAM core domain maps to 143 to 382 (RTEGVTAFVS…ELQAQAISVR (240 aa)). Positions 381–444 (VRMVGTTQRV…SHTLRGENVR (64 aa)) constitute a TRAM domain.

It belongs to the methylthiotransferase family. MiaB subfamily. As to quaternary structure, monomer. [4Fe-4S] cluster is required as a cofactor.

It is found in the cytoplasm. It catalyses the reaction N(6)-dimethylallyladenosine(37) in tRNA + (sulfur carrier)-SH + AH2 + 2 S-adenosyl-L-methionine = 2-methylsulfanyl-N(6)-dimethylallyladenosine(37) in tRNA + (sulfur carrier)-H + 5'-deoxyadenosine + L-methionine + A + S-adenosyl-L-homocysteine + 2 H(+). Functionally, catalyzes the methylthiolation of N6-(dimethylallyl)adenosine (i(6)A), leading to the formation of 2-methylthio-N6-(dimethylallyl)adenosine (ms(2)i(6)A) at position 37 in tRNAs that read codons beginning with uridine. The sequence is that of tRNA-2-methylthio-N(6)-dimethylallyladenosine synthase from Nitrosospira multiformis (strain ATCC 25196 / NCIMB 11849 / C 71).